The chain runs to 247 residues: NAD(P)H-quinone oxidoreductase subunit K (247 aa).

The [4Fe-4S] cluster site is built by Cys-63, Cys-64, Cys-128, and Cys-159.

This sequence belongs to the complex I 20 kDa subunit family. As to quaternary structure, NDH-1 can be composed of about 15 different subunits; different subcomplexes with different compositions have been identified which probably have different functions. [4Fe-4S] cluster serves as cofactor.

The protein localises to the cellular thylakoid membrane. The enzyme catalyses a plastoquinone + NADH + (n+1) H(+)(in) = a plastoquinol + NAD(+) + n H(+)(out). It catalyses the reaction a plastoquinone + NADPH + (n+1) H(+)(in) = a plastoquinol + NADP(+) + n H(+)(out). Its function is as follows. NDH-1 shuttles electrons from an unknown electron donor, via FMN and iron-sulfur (Fe-S) centers, to quinones in the respiratory and/or the photosynthetic chain. The immediate electron acceptor for the enzyme in this species is believed to be plastoquinone. Couples the redox reaction to proton translocation, and thus conserves the redox energy in a proton gradient. Cyanobacterial NDH-1 also plays a role in inorganic carbon-concentration. The chain is NAD(P)H-quinone oxidoreductase subunit K from Gloeothece citriformis (strain PCC 7424) (Cyanothece sp. (strain PCC 7424)).